The chain runs to 428 residues: Enolase (428 aa).

Residue Gln162 coordinates (2R)-2-phosphoglycerate. The Proton donor role is filled by Glu204. Mg(2+)-binding residues include Asp241, Glu283, and Asp310. Lys335, Arg364, Ser365, and Lys386 together coordinate (2R)-2-phosphoglycerate. The active-site Proton acceptor is Lys335.

This sequence belongs to the enolase family. The cofactor is Mg(2+).

Its subcellular location is the cytoplasm. The protein localises to the secreted. The protein resides in the cell surface. The enzyme catalyses (2R)-2-phosphoglycerate = phosphoenolpyruvate + H2O. Its pathway is carbohydrate degradation; glycolysis; pyruvate from D-glyceraldehyde 3-phosphate: step 4/5. Catalyzes the reversible conversion of 2-phosphoglycerate (2-PG) into phosphoenolpyruvate (PEP). It is essential for the degradation of carbohydrates via glycolysis. This is Enolase from Rhodococcus jostii (strain RHA1).